A 498-amino-acid polypeptide reads, in one-letter code: Glycerol kinase (498 aa).

ADP is bound at residue Thr12. Residues Thr12, Thr13, and Ser14 each contribute to the ATP site. Thr12 contacts sn-glycerol 3-phosphate. Arg16 is a binding site for ADP. Sn-glycerol 3-phosphate-binding residues include Arg82, Glu83, Tyr134, and Asp243. Positions 82, 83, 134, 243, and 244 each coordinate glycerol. Residues Thr265 and Gly308 each contribute to the ADP site. ATP is bound by residues Thr265, Gly308, Gln312, and Gly411. Residue Gly411 participates in ADP binding.

It belongs to the FGGY kinase family.

It carries out the reaction glycerol + ATP = sn-glycerol 3-phosphate + ADP + H(+). It participates in polyol metabolism; glycerol degradation via glycerol kinase pathway; sn-glycerol 3-phosphate from glycerol: step 1/1. Inhibited by fructose 1,6-bisphosphate (FBP). Key enzyme in the regulation of glycerol uptake and metabolism. Catalyzes the phosphorylation of glycerol to yield sn-glycerol 3-phosphate. The chain is Glycerol kinase from Brucella suis biovar 1 (strain 1330).